The chain runs to 261 residues: 14-3-3-like protein A (261 aa).

Belongs to the 14-3-3 family.

The sequence is that of 14-3-3-like protein A from Vicia faba (Broad bean).